Reading from the N-terminus, the 245-residue chain is U11/U12 small nuclear ribonucleoprotein 35 kDa protein (245 aa).

Positions 51–129 (LTLFVARLNL…HEIFVDYELE (79 aa)) constitute an RRM domain. Over residues 146 to 162 (GKKESGQLRFGGRDRPF) the composition is skewed to basic and acidic residues. A disordered region spans residues 146–165 (GKKESGQLRFGGRDRPFRKP). A Glycyl lysine isopeptide (Lys-Gly) (interchain with G-Cter in SUMO2) cross-link involves residue Lys-172. Residues 173-222 (NDQFREGKRERRERSRSRERHWDSRMRDHHDRGREKRWQEREPARAWPEG) form a disordered region. 2 stretches are compositionally biased toward basic and acidic residues: residues 174–185 (DQFREGKRERRE) and 192–216 (RHWD…REPA).

As to quaternary structure, component of the U11/U12 snRNPs that are part of the U12-type spliceosome.

The protein localises to the nucleus. The protein is U11/U12 small nuclear ribonucleoprotein 35 kDa protein (SNRNP35) of Bos taurus (Bovine).